A 222-amino-acid polypeptide reads, in one-letter code: Uridine diphosphate glucose pyrophosphatase NUDT14 (222 aa).

The 169-residue stretch at 38–206 folds into the Nudix hydrolase domain; the sequence is KTHDSVTILM…DIPKTLGVIY (169 aa). Positions 111-129 match the Nudix box motif; sequence PGLSLEEAACKEAWEECGY.

It belongs to the Nudix hydrolase family. As to quaternary structure, homodimer. It depends on Mg(2+) as a cofactor.

Its subcellular location is the cytoplasm. It carries out the reaction UDP-sugar + H2O = UMP + alpha-D-aldose 1-phosphate.. Its function is as follows. Hydrolyzes UDP-glucose to glucose 1-phosphate and UMP and ADP-ribose to ribose 5-phosphate and AMP. The physiological substrate is probably UDP-glucose. Poor activity on other substrates such as ADP-glucose, CDP-glucose, GDP-glucose and GDP-mannose. In Mus musculus (Mouse), this protein is Uridine diphosphate glucose pyrophosphatase NUDT14 (Nudt14).